Reading from the N-terminus, the 334-residue chain is Ketol-acid reductoisomerase (NADP(+)) (334 aa).

In terms of domain architecture, KARI N-terminal Rossmann spans 2–181 (TKVYYDQSVE…GATRAGVIET (180 aa)). Residues 25–28 (YGSQ), Arg48, Ser52, and 82–85 (DEIQ) contribute to the NADP(+) site. Residue His107 is part of the active site. Gly133 contacts NADP(+). The region spanning 182–327 (TFKEETETDL…RELRKMMPFI (146 aa)) is the KARI C-terminal knotted domain. The Mg(2+) site is built by Asp190, Glu194, Glu226, and Glu230. Ser251 serves as a coordination point for substrate.

Belongs to the ketol-acid reductoisomerase family. Requires Mg(2+) as cofactor.

The enzyme catalyses (2R)-2,3-dihydroxy-3-methylbutanoate + NADP(+) = (2S)-2-acetolactate + NADPH + H(+). The catalysed reaction is (2R,3R)-2,3-dihydroxy-3-methylpentanoate + NADP(+) = (S)-2-ethyl-2-hydroxy-3-oxobutanoate + NADPH + H(+). It functions in the pathway amino-acid biosynthesis; L-isoleucine biosynthesis; L-isoleucine from 2-oxobutanoate: step 2/4. It participates in amino-acid biosynthesis; L-valine biosynthesis; L-valine from pyruvate: step 2/4. Its function is as follows. Involved in the biosynthesis of branched-chain amino acids (BCAA). Catalyzes an alkyl-migration followed by a ketol-acid reduction of (S)-2-acetolactate (S2AL) to yield (R)-2,3-dihydroxy-isovalerate. In the isomerase reaction, S2AL is rearranged via a Mg-dependent methyl migration to produce 3-hydroxy-3-methyl-2-ketobutyrate (HMKB). In the reductase reaction, this 2-ketoacid undergoes a metal-dependent reduction by NADPH to yield (R)-2,3-dihydroxy-isovalerate. This is Ketol-acid reductoisomerase (NADP(+)) from Staphylococcus haemolyticus (strain JCSC1435).